Reading from the N-terminus, the 91-residue chain is Potassium channel toxin BmTXK-beta-2 (91 aa).

Residues 1-19 (MQRNLVVLLFLGMVALSSC) form the signal peptide. The propeptide occupies 20-27 (GLREKHFQ). The region spanning 54–91 (QFGCPAYQGYCDDHCQDIKKEEGFCHGFKCKCGIPMGF) is the BetaSPN-type CS-alpha/beta domain. 3 disulfides stabilise this stretch: cysteine 57/cysteine 78, cysteine 64/cysteine 83, and cysteine 68/cysteine 85.

It belongs to the long chain scorpion toxin family. Class 1 subfamily. In terms of tissue distribution, expressed by the venom gland.

It is found in the secreted. Inhibits voltage-gated potassium channel. This Olivierus martensii (Manchurian scorpion) protein is Potassium channel toxin BmTXK-beta-2.